The sequence spans 151 residues: D-aminoacyl-tRNA deacylase (151 aa).

The Gly-cisPro motif, important for rejection of L-amino acids signature appears at 136–137; it reads GP.

This sequence belongs to the DTD family. In terms of assembly, homodimer.

It localises to the cytoplasm. The catalysed reaction is glycyl-tRNA(Ala) + H2O = tRNA(Ala) + glycine + H(+). It catalyses the reaction a D-aminoacyl-tRNA + H2O = a tRNA + a D-alpha-amino acid + H(+). An aminoacyl-tRNA editing enzyme that deacylates mischarged D-aminoacyl-tRNAs. Also deacylates mischarged glycyl-tRNA(Ala), protecting cells against glycine mischarging by AlaRS. Acts via tRNA-based rather than protein-based catalysis; rejects L-amino acids rather than detecting D-amino acids in the active site. By recycling D-aminoacyl-tRNA to D-amino acids and free tRNA molecules, this enzyme counteracts the toxicity associated with the formation of D-aminoacyl-tRNA entities in vivo and helps enforce protein L-homochirality. The polypeptide is D-aminoacyl-tRNA deacylase (Lactococcus lactis subsp. cremoris (strain MG1363)).